We begin with the raw amino-acid sequence, 664 residues long: Intraflagellar transport protein 70B (664 aa).

TPR repeat units follow at residues 11–44, 45–78, 153–186, 188–220, 385–418, 423–456, and 458–491; these read DGEF…SSRS, RAGL…HPEL, YDGQ…SGYQ, DLSY…GIRQ, LTEQ…YDET, IPVL…CNDH, and VWKL…NYDN. The stretch at 507-534 forms a coiled coil; that stretch reads YIMTSQNEEAEELMRKIEKEEEQLSYGD. The TPR 8 repeat unit spans residues 543–576; the sequence is CIVNLVIGTLYCAKGNYDFGISRVIKSLEPYHKK.

This sequence belongs to the TTC30/dfy-1/fleer family. Interacts with the IFT B complex components IFT27, IFT46, IFT74, IFT52, IFT57, IFT80, IFT81 and IFT88. Interacts with KIF17.

It is found in the cell projection. The protein resides in the cilium. In terms of biological role, required for polyglutamylation of axonemal tubulin. Plays a role in anterograde intraflagellar transport (IFT), the process by which cilia precursors are transported from the base of the cilium to the site of their incorporation at the tip. The sequence is that of Intraflagellar transport protein 70B (Ift70b) from Mus musculus (Mouse).